The following is a 309-amino-acid chain: Olfactory receptor 1A1 (309 aa).

The Extracellular segment spans residues 1–25 (MRENNQSSTLEFILLGVTGQQEQED). An N-linked (GlcNAc...) asparagine glycan is attached at asparagine 5. A helical transmembrane segment spans residues 26–49 (FFYILFLFIYPITLIGNLLIVLAI). At 50–57 (CSDVRLHN) the chain is on the cytoplasmic side. A helical membrane pass occupies residues 58–79 (PMYFLLANLSLVDIFFSSVTIP). The Extracellular portion of the chain corresponds to 80 to 100 (KMLANHLLGSKSISFGGCLTQ). A disulfide bridge connects residues cysteine 97 and cysteine 189. A helical transmembrane segment spans residues 101–120 (MYFMIALGNTDSYILAAMAY). The Cytoplasmic segment spans residues 121–139 (DRAVAISRPLHYTTIMSPR). Residues 140–158 (SCIWLIAGSWVIGNANALP) traverse the membrane as a helical segment. The Extracellular segment spans residues 159–195 (HTLLTASLSFCGNQEVANFYCDITPLLKLSCSDIHFH). The chain crosses the membrane as a helical span at residues 196–218 (VKMMYLGVGIFSVPLLCIIVSYI). Over 219–235 (RVFSTVFQVPSTKGVLK) the chain is Cytoplasmic. A helical membrane pass occupies residues 236 to 258 (AFSTCGSHLTVVSLYYGTVMGTY). Over 259–270 (FRPLTNYSLKDA) the chain is Extracellular. N-linked (GlcNAc...) asparagine glycosylation occurs at asparagine 264. The chain crosses the membrane as a helical span at residues 271-290 (VITVMYTAVTPMLNPFIYSL). Residues 291–309 (RNRDMKAALRKLFNKRISS) are Cytoplasmic-facing.

Belongs to the G-protein coupled receptor 1 family.

It localises to the cell membrane. Its function is as follows. Odorant receptor. This Homo sapiens (Human) protein is Olfactory receptor 1A1 (OR1A1).